The following is a 396-amino-acid chain: MTTNTVSRKVAWLRVVTLAVAAFIFNTTEFVPVGLLSDIAQSFHMQTAQVGIMLTIYAWVVALMSLPFMLMTSQVERRKLLICLFVVFIASHVLSFLSWSFTVLVISRIGVAFAHAIFWSITASLAIRMAPAGKRAQALSLIATGTALAMVLGLPLGRIVGQYFGWRMTFFAIGIGALITLLCLIKLLPLLPSEHSGSLKSLPLLFRRPALMSIYLLTVVVVTAHYTAYSYIEPFVQNIAGFSANFATALLLLLGGAGIIGSVIFGKLGNQYASALVSTAIALLLVCLALLLPAANSEIHLGVLSIFWGIAMMIIGLGMQVKVLALAPDATDVAMALFSGIFNIGIGAGALVGNQVSLHWSMSMIGYVGAVPAFAALIWSIIIFRRWPVTLEEQTQ.

The next 12 membrane-spanning stretches (helical) occupy residues 15–35 (VVTL…PVGL), 50–70 (VGIM…PFML), 81–101 (LICL…SWSF), 103–123 (VLVI…SITA), 136–156 (AQAL…GLPL), 170–190 (FFAI…LLPL), 209–229 (PALM…YTAY), 246–266 (FATA…VIFG), 275–295 (ALVS…LPAA), 299–319 (IHLG…GLGM), 333–353 (VAMA…ALVG), and 364–384 (MIGY…IIIF).

Belongs to the major facilitator superfamily. SotB (TC 2.A.1.2) family.

The protein localises to the cell inner membrane. Functionally, involved in the efflux of sugars. The physiological role may be the reduction of the intracellular concentration of toxic sugars or sugar metabolites. This is Probable sugar efflux transporter from Escherichia coli O139:H28 (strain E24377A / ETEC).